A 74-amino-acid polypeptide reads, in one-letter code: Complement C5a anaphylatoxin (74 aa).

The tract at residues Tyr15–Gly44 is involved in C5AR1 binding. 3 disulfides stabilise this stretch: Cys21/Cys47, Cys22/Cys54, and Cys34/Cys55. The Anaphylatoxin-like domain occupies Cys21–Cys55. The tract at residues Leu72–Arg74 is required for 90% of C5a activity; although Arg-74 is not essential.

The protein localises to the secreted. In terms of biological role, mediator of local inflammatory process released following cleavage by C5 convertase. Acts by binding to its receptor (C5AR1 or C5AR2), activating G protein-coupled receptor signaling and inducing a variety of responses including intracellular calcium release, contraction of smooth muscle, increased vascular permeability, and histamine release from mast cells and basophilic leukocytes. C5a is also a potent chemokine which stimulates the locomotion of polymorphonuclear leukocytes and directs their migration toward sites of inflammation. The protein is Complement C5a anaphylatoxin (C5) of Sus scrofa (Pig).